A 194-amino-acid polypeptide reads, in one-letter code: Protein cholesin (194 aa).

The interval 1–83 is disordered; that stretch reads MAKQKRKVPE…RKKEERQRLR (83 aa). A phosphoserine mark is found at Ser-23 and Ser-59. A compositionally biased stretch (basic and acidic residues) spans 61–83; sequence EEQRVLERKLKKERKKEERQRLR. Residues Ser-97 and Ser-175 each carry the phosphoserine modification.

As to expression, secreted from the instestine, secretion is induced by feeding and cholesterol absorption.

The protein localises to the secreted. Hormone secreted from the intestine in response to cholesterol, where it acts to inhibit cholesterol synthesis in the liver and VLDL secretion,leading to a reduction in circulating cholesterol levels. Acts through binding to its receptor, GPR146. This is Protein cholesin from Homo sapiens (Human).